Reading from the N-terminus, the 518-residue chain is UPF0053 inner membrane protein YoaE (518 aa).

At 1-13 (MEFLMDPSIWAGL) the chain is on the cytoplasmic side. Residues 14–34 (LTLVVLEIVLGIDNLVFIAIL) traverse the membrane as a helical segment. The Periplasmic portion of the chain corresponds to 35–48 (ADKLPPKQRDKARL). Residues 49-69 (LGLSLALIMRLGLLSLISWMV) traverse the membrane as a helical segment. Residues 70 to 78 (TLTKPLFTV) are Cytoplasmic-facing. A helical transmembrane segment spans residues 79-99 (MDFSFSGRDLIMLFGGIFLLF). Topologically, residues 100 to 124 (KATTELHERLENRDHDSGHGKGYAS) are periplasmic. Residues 125–145 (FWVVVTQIVILDAVFSLDAVI) form a helical membrane-spanning segment. At 146–149 (TAVG) the chain is on the cytoplasmic side. Residues 150 to 170 (MVNHLPVMMAAVVIAMAVMLL) traverse the membrane as a helical segment. The Periplasmic portion of the chain corresponds to 171–184 (ASKPLTRFVNQHPT). The chain crosses the membrane as a helical span at residues 185 to 205 (VVVLCLSFLLMIGLSLVAEGF). A topological domain (cytoplasmic) is located at residue G206. The chain crosses the membrane as a helical span at residues 207–227 (FHIPKGYLYAAIGFSIIIEVF). Residues 228–354 (NQIARRNFIR…IGIVRAKELL (127 aa)) lie on the Periplasmic side of the membrane. CBS domains are found at residues 304–363 (MTPR…GVDV) and 367–427 (ASAS…DADE). A helical transmembrane segment spans residues 355–375 (VALEEGVDVAAIASASPAIIV). At 376 to 518 (PETLDPINLL…KEQPAHDEDE (143 aa)) the chain is on the cytoplasmic side.

This sequence belongs to the UPF0053 family.

Its subcellular location is the cell inner membrane. This Escherichia coli O157:H7 protein is UPF0053 inner membrane protein YoaE (yoaE).